A 279-amino-acid polypeptide reads, in one-letter code: Movement protein (279 aa).

A disordered region spans residues 246 to 279 (SESEDLNVESPPAAIGSSSASRSEAFRPQVVNGL). A compositionally biased stretch (low complexity) spans 254 to 268 (ESPPAAIGSSSASRS).

This sequence belongs to the cucumovirus movement protein family.

It localises to the host cell junction. Its subcellular location is the host plasmodesma. Its function is as follows. Transports viral genome to neighboring plant cells directly through plasmosdesmata, without any budding. The movement protein allows efficient cell to cell propagation, by bypassing the host cell wall barrier. Acts by forming a tubular structure at the host plasmodesmata, enlarging it enough to allow free passage of virion capsids. This is Movement protein from Cucurbita pepo (Vegetable marrow).